The primary structure comprises 158 residues: MSTNAIAVLRGDTVSGIIRFKQDKEGLPTTVTGEVKGLTPGLHGFHIHQYGDTTNGCISAGPHFNPYNKTHGDRTDEIRHVGDLGNIEAGADGTAHISISDQHIQLLGPNSIIGRSIVVHADQDDLGKGVGAKKDESLKTGNAGARVACGIVAIGAAS.

Positions 46, 48, and 63 each coordinate Cu cation. The cysteines at positions 57 and 149 are disulfide-linked. Positions 63, 71, 80, and 83 each coordinate Zn(2+). H120 contacts Cu cation.

Belongs to the Cu-Zn superoxide dismutase family. As to quaternary structure, homodimer. It depends on Cu cation as a cofactor. Zn(2+) is required as a cofactor.

The protein resides in the cytoplasm. The catalysed reaction is 2 superoxide + 2 H(+) = H2O2 + O2. Its function is as follows. Destroys radicals which are normally produced within the cells and which are toxic to biological systems. This Onchocerca volvulus protein is Superoxide dismutase [Cu-Zn] (sod-1).